The following is a 295-amino-acid chain: Acetyl-coenzyme A carboxylase carboxyl transferase subunit beta (295 aa).

The segment at 1–20 (MSWLSKLMPSGIRTENTPAK) is disordered. One can recognise a CoA carboxyltransferase N-terminal domain in the interval 28-295 (LWEKCSNCGS…QPHPQDADAA (268 aa)). Zn(2+) is bound by residues cysteine 32, cysteine 35, cysteine 51, and cysteine 54. The C4-type zinc-finger motif lies at 32-54 (CSNCGSALYGPELEENLEVCPKC).

The protein belongs to the AccD/PCCB family. As to quaternary structure, acetyl-CoA carboxylase is a heterohexamer composed of biotin carboxyl carrier protein (AccB), biotin carboxylase (AccC) and two subunits each of ACCase subunit alpha (AccA) and ACCase subunit beta (AccD). Requires Zn(2+) as cofactor.

The protein localises to the cytoplasm. It catalyses the reaction N(6)-carboxybiotinyl-L-lysyl-[protein] + acetyl-CoA = N(6)-biotinyl-L-lysyl-[protein] + malonyl-CoA. It functions in the pathway lipid metabolism; malonyl-CoA biosynthesis; malonyl-CoA from acetyl-CoA: step 1/1. In terms of biological role, component of the acetyl coenzyme A carboxylase (ACC) complex. Biotin carboxylase (BC) catalyzes the carboxylation of biotin on its carrier protein (BCCP) and then the CO(2) group is transferred by the transcarboxylase to acetyl-CoA to form malonyl-CoA. This is Acetyl-coenzyme A carboxylase carboxyl transferase subunit beta from Xanthomonas euvesicatoria pv. vesicatoria (strain 85-10) (Xanthomonas campestris pv. vesicatoria).